The sequence spans 674 residues: Sodium/myo-inositol cotransporter 2 (674 aa).

Residues 1–27 (MESSPSSPQPTQSDPLAVFPQRTLEPA) lie on the Extracellular side of the membrane. The chain crosses the membrane as a helical span at residues 28-48 (DIAVLVLYFLFVLAVGLWSTV). The Cytoplasmic portion of the chain corresponds to 49–56 (KTRRDTVK). Residues 57–77 (GYFLAGGDMVWWPVGASLFAS) form a helical membrane-spanning segment. At 78–102 (NVGSGHFVGLAGSGAAAGLSVTAYE) the chain is on the extracellular side. A helical membrane pass occupies residues 103–123 (FNGIFSVLMLAWIFLPIYIAG). Residues 124–140 (QVTTMPEYLRKRFGGSR) are Cytoplasmic-facing. Residues 141-161 (IPITLAVLYLFIYIFTKISVD) form a helical membrane-spanning segment. Topologically, residues 162–180 (MYAGAIFIQQSLHLNLYLA) are extracellular. Residues 181-201 (IVGLLAITALYTIAGGLAAVI) form a helical membrane-spanning segment. The Cytoplasmic segment spans residues 202-208 (YTDALQT). The chain crosses the membrane as a helical span at residues 209–229 (LIMLIGALTLMGYSFAAVGGM). Residues 230–272 (EGLKEKYFLALASNRSGNSSCGLPREDAFHIFRDPLTSDLPWP) lie on the Extracellular side of the membrane. A helical membrane pass occupies residues 273 to 293 (GILFGMSIPSLWYWCTDQVIV). At 294–308 (QRTLAAKNLSHAKGG) the chain is on the cytoplasmic side. A helical transmembrane segment spans residues 309 to 329 (SLMAAYLKVLPLFIMVFPGMV). Residues 330–374 (SRVLFPDQVACADPEICQKVCSNPAGCSDIAYPKLVLELLPMGLR) lie on the Extracellular side of the membrane. The helical transmembrane segment at 375-397 (GLMMAVMVAALMSSLTSIFNSAS) threads the bilayer. Residues 398-418 (TIFTMDLWNHLRPRASERELM) lie on the Cytoplasmic side of the membrane. A helical transmembrane segment spans residues 419–439 (IVGRVFVLLLVLVSILWIPVV). Topologically, residues 440–446 (QASQGGQ) are extracellular. The helical transmembrane segment at 447-467 (LFIYIQSISSYLQPPVAVVFI) threads the bilayer. Residues 468-479 (MGCFWKRTNEKG) are Cytoplasmic-facing. The chain crosses the membrane as a helical span at residues 480–500 (AFSGLILGLLLGLVRLVLDFI). At 501-518 (YPQPRCDQPDERPAVVRD) the chain is on the extracellular side. The chain crosses the membrane as a helical span at residues 519-539 (VHYLYFSMILSSVTLVTVSTV). At 540–653 (SWCTAPPTQE…SLEEIPLVKT (114 aa)) the chain is on the cytoplasmic side. Residues 654-674 (LLDINLIVCISCAIFLWGYFA) traverse the membrane as a helical segment.

The protein belongs to the sodium:solute symporter (SSF) (TC 2.A.21) family.

It is found in the membrane. The protein resides in the apical cell membrane. The enzyme catalyses myo-inositol(out) + 2 Na(+)(out) = myo-inositol(in) + 2 Na(+)(in). The catalysed reaction is 1D-chiro-inositol(out) + 2 Na(+)(out) = 1D-chiro-inositol(in) + 2 Na(+)(in). It catalyses the reaction D-glucose(out) + 2 Na(+)(out) = D-glucose(in) + 2 Na(+)(in). It carries out the reaction D-xylose(out) + 2 Na(+)(out) = D-xylose(in) + 2 Na(+)(in). MI transport activity inhibited by D-chiro-inositol (DCI), phlorizin (Pz) and sodium (Na(+)). Insulin increases D-chiro-inositol uptake. Functionally, involved in the sodium-dependent cotransport of myo-inositol (MI) with a Na(+):MI stoichiometry of 2:1. Exclusively responsible for apical MI transport and absorption in intestine. Can also transport D-chiro-inositol (DCI) but not L-fucose. Exhibits stereospecific cotransport of both D-glucose and D-xylose. May induce apoptosis through the TNF-alpha, PDCD1 pathway. May play a role in the regulation of MI concentration in serum, involving reabsorption in at least the proximal tubule of the kidney. In Sus scrofa (Pig), this protein is Sodium/myo-inositol cotransporter 2.